The following is a 301-amino-acid chain: Troponin T, cardiac muscle (301 aa).

Composition is skewed to acidic residues over residues 1–42 and 50–74; these read MSDL…EEEA and AETE…DGPV. Disordered stretches follow at residues 1–99 and 125–223; these read MSDL…GERV and ENRK…KKKK. Residue serine 2 is modified to N-acetylserine. Serine 2 carries the phosphoserine; by CK2 modification. Pro residues predominate over residues 82–93; that stretch reads RPFMPNLVPPKI. Composition is skewed to basic and acidic residues over residues 125–186 and 206–223; these read ENRK…DEAR and QTER…KKKK. The residue at position 207 (threonine 207) is a Phosphothreonine; by PKC/PRKCA. Phosphoserine; by PKC/PRKCA is present on serine 211. Residue threonine 216 is modified to Phosphothreonine; by PKC/PRKCA and RAF1. Threonine 297 carries the phosphothreonine; by PKC/PRKCA modification.

The protein belongs to the troponin T family. In terms of assembly, binds with troponins I and C to make the thin-filament regulatory complex, troponin. In terms of processing, phosphorylation at Thr-216 by PRKCA induces significant reduction in myofilament calcium sensitivity and actomyosin ATPase activity. As to expression, the major isoform in adult heart is CTNT4.

In terms of biological role, troponin T is the tropomyosin-binding subunit of troponin, the thin filament regulatory complex which confers calcium-sensitivity to striated muscle actomyosin ATPase activity. This is Troponin T, cardiac muscle (TNNT2) from Oryctolagus cuniculus (Rabbit).